Here is a 381-residue protein sequence, read N- to C-terminus: Sulfite reductase, dissimilatory-type subunit beta (381 aa).

[4Fe-4S] cluster is bound by residues cysteine 151, cysteine 188, cysteine 189, cysteine 193, cysteine 231, cysteine 258, cysteine 261, and cysteine 264. Cysteine 193 is a binding site for siroheme. Residues 249–276 (NTIAIKNERCMYCGNCYTMCPALPISDG) form the 4Fe-4S ferredoxin-type domain.

In terms of assembly, heterohexamer of two alpha, two beta and two gamma subunits. It depends on [4Fe-4S] cluster as a cofactor. The cofactor is siroheme.

It catalyses the reaction [DsrC protein]-trisulfide + NAD(+) + 3 H2O = [DsrC protein]-dithiol + sulfite + NADH + 3 H(+). Catalyzes the reduction of sulfite to sulfide. This is the terminal oxidation reaction in sulfate respiration, a process catalyzed by the sulfate-reducing bacteria. This is Sulfite reductase, dissimilatory-type subunit beta (dsvB) from Nitratidesulfovibrio vulgaris (strain ATCC 29579 / DSM 644 / CCUG 34227 / NCIMB 8303 / VKM B-1760 / Hildenborough) (Desulfovibrio vulgaris).